A 314-amino-acid chain; its full sequence is MEKRNLTVVREFVLLGLPSSAEQQHLLSVLFLCMYLATTLGNMLIIATIGFDSHLHSPMYFFLSNLAFVDICFTSTTVPQMVVNILTGTKTISFAGCLTQLFFFVSFVNMDSLLLCVMAYDRYVAICHPLHYTARMNLCLCVQLVAGLWLVTYLHALLHTVLIAQLSFCASNIIHHFFCDLNPLLQLSCSDVSFNVMIIFAVGGLLALTPLVCILVSYGLIFSTVLKITSTQGKQRAVSTCSCHLSVVVLFYGTAIAVYFSPSSPHMPESDTLSTIMYSMVAPMLNPFIYTLRNRDMKRGLQKMLLKCTVFQQQ.

The Extracellular portion of the chain corresponds to 1 to 25; the sequence is MEKRNLTVVREFVLLGLPSSAEQQH. The helical transmembrane segment at 26–49 threads the bilayer; it reads LLSVLFLCMYLATTLGNMLIIATI. Residues 50 to 57 are Cytoplasmic-facing; sequence GFDSHLHS. The chain crosses the membrane as a helical span at residues 58-79; sequence PMYFFLSNLAFVDICFTSTTVP. At 80–100 the chain is on the extracellular side; it reads QMVVNILTGTKTISFAGCLTQ. A disulfide bridge links C97 with C189. The helical transmembrane segment at 101 to 120 threads the bilayer; that stretch reads LFFFVSFVNMDSLLLCVMAY. The Cytoplasmic portion of the chain corresponds to 121–139; that stretch reads DRYVAICHPLHYTARMNLC. A helical membrane pass occupies residues 140-158; that stretch reads LCVQLVAGLWLVTYLHALL. Residues 159-195 are Extracellular-facing; the sequence is HTVLIAQLSFCASNIIHHFFCDLNPLLQLSCSDVSFN. A helical transmembrane segment spans residues 196–219; it reads VMIIFAVGGLLALTPLVCILVSYG. Residues 220 to 236 lie on the Cytoplasmic side of the membrane; it reads LIFSTVLKITSTQGKQR. The chain crosses the membrane as a helical span at residues 237–259; it reads AVSTCSCHLSVVVLFYGTAIAVY. The Extracellular segment spans residues 260-272; it reads FSPSSPHMPESDT. The helical transmembrane segment at 273–292 threads the bilayer; the sequence is LSTIMYSMVAPMLNPFIYTL. Topologically, residues 293-314 are cytoplasmic; that stretch reads RNRDMKRGLQKMLLKCTVFQQQ.

This sequence belongs to the G-protein coupled receptor 1 family.

It is found in the cell membrane. Odorant receptor. The chain is Olfactory receptor 1C1 (OR1C1) from Homo sapiens (Human).